The sequence spans 655 residues: Integrin beta-5 (655 aa).

Positions 1 to 234 (DLSLSMKDDL…QLIINAYNSI (234 aa)) constitute a VWFA domain. At 1-575 (DLSLSMKDDL…REPECGNTPN (575 aa)) the chain is on the extracellular side. The Mg(2+) site is built by Ser-3 and Ser-5. Positions 5, 8, 9, and 40 each coordinate Ca(2+). A disulfide bridge links Cys-58 with Cys-67. The Ca(2+) site is built by Asn-98, Asp-100, Pro-102, and Glu-103. Glu-103 is a Mg(2+) binding site. The cysteines at positions 115 and 156 are disulfide-linked. N-linked (GlcNAc...) asparagine glycosylation occurs at Asn-203. Residue Gly-218 coordinates Ca(2+). Cystine bridges form between Cys-257/Cys-269, Cys-289/Cys-317, Cys-321/Cys-340, Cys-332/Cys-343, Cys-345/Cys-354, Cys-356/Cys-386, Cys-369/Cys-384, Cys-378/Cys-389, Cys-391/Cys-404, Cys-406/Cys-427, Cys-411/Cys-425, Cys-419/Cys-430, and Cys-432/Cys-441. A glycan (N-linked (GlcNAc...) asparagine) is linked at Asn-316. I-EGF domains follow at residues 321–355 (CSVG…TRCE), 356–405 (CQDG…PFCE), 406–442 (CDNF…DNCN), and 443–482 (CSTD…EMCE). Asn-408 is a glycosylation site (N-linked (GlcNAc...) asparagine). Residue Asn-442 is glycosylated (N-linked (GlcNAc...) asparagine). Intrachain disulfides connect Cys-443–Cys-466, Cys-450–Cys-464, Cys-458–Cys-469, Cys-471–Cys-481, Cys-484–Cys-487, Cys-491–Cys-538, Cys-497–Cys-517, Cys-500–Cys-513, and Cys-546–Cys-570. N-linked (GlcNAc...) asparagine glycosylation is found at Asn-510 and Asn-561. A helical transmembrane segment spans residues 576–598 (AMTILLAVVGSILLVGLALLAIW). Over 599-655 (KLLVTIHDRREFAKFQSERSRARYEMASNPLYRKPISTHTVDFTFNKFNKSYNGTVD) the chain is Cytoplasmic. Ser-626 carries the post-translational modification Phosphoserine.

This sequence belongs to the integrin beta chain family. In terms of assembly, heterodimer of an alpha and a beta subunit. Beta-5 (ITGB5) associates with alpha-V (ITGAV). Interacts with MYO10. Interacts with DAB2. Integrin ITGAV:ITGB5 interacts with FBLN5 (via N-terminus). ITGAV:ITGB5 interacts with CCN3. Interacts with tensin TNS3; TNS3 also interacts with PEAK1, thus acting as an adapter molecule to bridge the association of PEAK1 with ITGB5.

The protein localises to the cell membrane. Its function is as follows. Integrin alpha-V/beta-5 (ITGAV:ITGB5) is a receptor for fibronectin. It recognizes the sequence R-G-D in its ligand. The polypeptide is Integrin beta-5 (ITGB5) (Papio cynocephalus (Yellow baboon)).